A 78-amino-acid polypeptide reads, in one-letter code: Acyl carrier protein BQ2027_MB0103 (78 aa).

The 78-residue stretch at 1 to 78 folds into the Carrier domain; sequence MRDRILAAVC…ELEAVCTEFG (78 aa). S35 is subject to O-(pantetheine 4'-phosphoryl)serine.

Belongs to the acyl carrier protein (ACP) family. Pantetheine 4'-phosphate serves as cofactor.

Its pathway is lipid metabolism; fatty acid metabolism. In terms of biological role, acyl-carrier protein (ACP) involved in the biosynthesis of a unique class of isonitrile lipopeptides (INLPs) that seem to play a role in metal acquisition. Is the dedicated ACP for the loading of activated acyl groups catalyzed by FadD10. The chain is Acyl carrier protein BQ2027_MB0103 from Mycobacterium bovis (strain ATCC BAA-935 / AF2122/97).